Reading from the N-terminus, the 291-residue chain is Verruculogen synthase (291 aa).

The active site involves tyrosine 68.

Belongs to the PhyH family. In terms of assembly, homodimer. It depends on Fe cation as a cofactor.

It catalyses the reaction fumitremorgin B + 2-oxoglutarate + AH2 + 2 O2 = verruculogen + succinate + A + CO2 + H2O. Its pathway is mycotoxin biosynthesis. Verruculogen synthase; part of the gene cluster that mediates the biosynthesis of fumitremorgins, indole alkaloids that carry not only intriguing chemical structures, but also interesting biological and pharmacological activities. The biosynthesis of fumitremorgin-type alkaloids begins by condensation of the two amino acids L-tryptophan and L-proline to brevianamide F, catalyzed by the non-ribosomal peptide synthetase ftmA. Brevianamide F is then prenylated by the prenyltransferase ftmPT1/ftmB in the presence of dimethylallyl diphosphate, resulting in the formation of tryprostatin B. The three cytochrome P450 monooxygenases, ftmP450-1/ftmC, ftmP450-2/ftmE and ftmP450-3/FtmG, are responsible for the conversion of tryprostatin B to 6-hydroxytryprostatin B, tryprostatin A to fumitremorgin C and fumitremorgin C to 12,13-dihydroxyfumitremorgin C, respectively. The putative methyltransferase ftmMT/ftmD is expected for the conversion of 6-hydroxytryprostatin B to tryprostatin A. FtmPT2/FtmH catalyzes the prenylation of 12,13-dihydroxyfumitre-morgin C in the presence of dimethylallyl diphosphate, resulting in the formation of fumitremorgin B. Fumitremorgin B is further converted to verruculogen by ftmOx1/ftmF via the insertion of an endoperoxide bond between the two prenyl moieties. In some fungal species, verruculogen is further converted to fumitremorgin A, but the enzymes involved in this step have not been identified yet. This is Verruculogen synthase from Aspergillus fumigatus (strain ATCC MYA-4609 / CBS 101355 / FGSC A1100 / Af293) (Neosartorya fumigata).